We begin with the raw amino-acid sequence, 505 residues long: Lysine--tRNA ligase 1 (505 aa).

Mg(2+)-binding residues include Asp-415 and Glu-422.

Belongs to the class-II aminoacyl-tRNA synthetase family. As to quaternary structure, homodimer. It depends on Mg(2+) as a cofactor.

It is found in the cytoplasm. The enzyme catalyses tRNA(Lys) + L-lysine + ATP = L-lysyl-tRNA(Lys) + AMP + diphosphate. In Mycobacterium bovis (strain ATCC BAA-935 / AF2122/97), this protein is Lysine--tRNA ligase 1 (lysS1).